The primary structure comprises 168 residues: MPRSRINGNFIDKTFSIVANILLRIIPTTSGEKEAFTYYRDGMSAQSEGNYAEALQNYYEAMRLEIDPYDRSYILYNIGLIHTSNGEHTKALEYYFRALERNPFLPQACNNMAVICHYRGEQAIQQGDSELAETWFDQAAEYWKQAIALTPGNYIEAHNWLKITGRFE.

TPR repeat units follow at residues 35–68, 72–105, and 120–153; these read AFTY…EIDP, SYIL…NPFL, and GEQA…TPGN.

Belongs to the Ycf3 family.

Its subcellular location is the plastid. It localises to the chloroplast thylakoid membrane. Essential for the assembly of the photosystem I (PSI) complex. May act as a chaperone-like factor to guide the assembly of the PSI subunits. The chain is Photosystem I assembly protein Ycf3 from Ipomoea purpurea (Common morning glory).